A 371-amino-acid polypeptide reads, in one-letter code: DNA primase DnaG (371 aa).

Positions Asp-173–Pro-248 constitute a Toprim domain. Mg(2+) contacts are provided by Glu-179, Asp-221, and Asp-223.

This sequence belongs to the archaeal DnaG primase family. In terms of assembly, forms a ternary complex with MCM helicase and DNA. Component of the archaeal exosome complex. It depends on Mg(2+) as a cofactor.

It carries out the reaction ssDNA + n NTP = ssDNA/pppN(pN)n-1 hybrid + (n-1) diphosphate.. In terms of biological role, RNA polymerase that catalyzes the synthesis of short RNA molecules used as primers for DNA polymerase during DNA replication. Also part of the exosome, which is a complex involved in RNA degradation. Acts as a poly(A)-binding protein that enhances the interaction between heteromeric, adenine-rich transcripts and the exosome. The polypeptide is DNA primase DnaG (Nanoarchaeum equitans (strain Kin4-M)).